Here is a 662-residue protein sequence, read N- to C-terminus: Transketolase (662 aa).

Residue H28 participates in substrate binding. Residues H68 and 115–117 (GPL) each bind thiamine diphosphate. D156 contributes to the Mg(2+) binding site. Residues G157 and N186 each contribute to the thiamine diphosphate site. Residues N186 and I188 each coordinate Mg(2+). H261, R356, and S383 together coordinate substrate. Residue H261 coordinates thiamine diphosphate. The Proton donor role is filled by E410. F436 provides a ligand contact to thiamine diphosphate. The substrate site is built by H460, D468, and R519.

Belongs to the transketolase family. As to quaternary structure, homodimer. It depends on Mg(2+) as a cofactor. The cofactor is Ca(2+). Requires Mn(2+) as cofactor. Co(2+) is required as a cofactor. Thiamine diphosphate serves as cofactor.

The enzyme catalyses D-sedoheptulose 7-phosphate + D-glyceraldehyde 3-phosphate = aldehydo-D-ribose 5-phosphate + D-xylulose 5-phosphate. It participates in carbohydrate biosynthesis; Calvin cycle. The protein operates within carbohydrate degradation; pentose phosphate pathway. In terms of biological role, catalyzes the transfer of a two-carbon ketol group from a ketose donor to an aldose acceptor, via a covalent intermediate with the cofactor thiamine pyrophosphate. The polypeptide is Transketolase (tkt) (Staphylococcus epidermidis (strain ATCC 12228 / FDA PCI 1200)).